We begin with the raw amino-acid sequence, 93 residues long: Pyrimidine/purine nucleoside phosphorylase (93 aa).

This sequence belongs to the nucleoside phosphorylase PpnP family.

The enzyme catalyses a purine D-ribonucleoside + phosphate = a purine nucleobase + alpha-D-ribose 1-phosphate. The catalysed reaction is adenosine + phosphate = alpha-D-ribose 1-phosphate + adenine. It catalyses the reaction cytidine + phosphate = cytosine + alpha-D-ribose 1-phosphate. It carries out the reaction guanosine + phosphate = alpha-D-ribose 1-phosphate + guanine. The enzyme catalyses inosine + phosphate = alpha-D-ribose 1-phosphate + hypoxanthine. The catalysed reaction is thymidine + phosphate = 2-deoxy-alpha-D-ribose 1-phosphate + thymine. It catalyses the reaction uridine + phosphate = alpha-D-ribose 1-phosphate + uracil. It carries out the reaction xanthosine + phosphate = alpha-D-ribose 1-phosphate + xanthine. Its function is as follows. Catalyzes the phosphorolysis of diverse nucleosides, yielding D-ribose 1-phosphate and the respective free bases. Can use uridine, adenosine, guanosine, cytidine, thymidine, inosine and xanthosine as substrates. Also catalyzes the reverse reactions. The chain is Pyrimidine/purine nucleoside phosphorylase from Shewanella halifaxensis (strain HAW-EB4).